A 211-amino-acid polypeptide reads, in one-letter code: Leucyl/phenylalanyl-tRNA--protein transferase (211 aa).

Belongs to the L/F-transferase family.

It is found in the cytoplasm. The catalysed reaction is N-terminal L-lysyl-[protein] + L-leucyl-tRNA(Leu) = N-terminal L-leucyl-L-lysyl-[protein] + tRNA(Leu) + H(+). It catalyses the reaction N-terminal L-arginyl-[protein] + L-leucyl-tRNA(Leu) = N-terminal L-leucyl-L-arginyl-[protein] + tRNA(Leu) + H(+). It carries out the reaction L-phenylalanyl-tRNA(Phe) + an N-terminal L-alpha-aminoacyl-[protein] = an N-terminal L-phenylalanyl-L-alpha-aminoacyl-[protein] + tRNA(Phe). Its function is as follows. Functions in the N-end rule pathway of protein degradation where it conjugates Leu, Phe and, less efficiently, Met from aminoacyl-tRNAs to the N-termini of proteins containing an N-terminal arginine or lysine. This Flavobacterium psychrophilum (strain ATCC 49511 / DSM 21280 / CIP 103535 / JIP02/86) protein is Leucyl/phenylalanyl-tRNA--protein transferase.